The primary structure comprises 583 residues: MAEDLFEKLVEIGKRRGFFWPSYEIYGGVAGFYDWGPLGHLLKRRIIEKWRRYFVLMHQDHVVEIETPVIGPEKVYIASGHVEHFTDPIVRCTSCGRTFRADHLVEEALGINAEGLSVSELDRIIRERGLRCPVCQGELGRVETFNLLFRTQIGPYEGSVGYLRPELAQGIFVAFKRVYEAMRSRIPLGIAQVGRVGRNEISPRQALVRLREFTIMEMEYFIDPEDQWGSCPFFHRMADSKLPILTYEAKRRGEEKPESFKLEEAVNEGVVISPCLGYWMAVGMRFVEDLGVPSDSIMFEEKGPEERAHYSSQTFDQLVKVSRWGWIEVAGHSYRGDYDLSRHMKYSGQDLTAFKPYPKPIVVKKRRVVVDKAAIGRALKSRAKTVLEELGRMGEGELERLAASNRAVVAGVELPPGSLRIVEVEEKVSGRRFVPHVVEPSFGTDRNVYVALEYAYREVEGRVVLAFPRDIAPVQAVVLPLVENDEKLVERARMVYETLVEAGFTVYYDDSGSIGRRYARADEIGVPAAVTIDYQTLEDGTVTLRDRDTWRQVRIGADEVVDKLRRFIYDGARLEDLGTPVKP.

Residues Arg-100 and Glu-166 each contribute to the substrate site. ATP contacts are provided by residues 198–200 (RNE), 208–213 (VRLREF), 328–329 (EV), and 443–446 (GTDR). 213–217 (FTIME) contacts substrate. 439 to 443 (EPSFG) is a substrate binding site.

The protein belongs to the class-II aminoacyl-tRNA synthetase family.

It localises to the cytoplasm. It carries out the reaction tRNA(Gly) + glycine + ATP = glycyl-tRNA(Gly) + AMP + diphosphate. Functionally, catalyzes the attachment of glycine to tRNA(Gly). The chain is Glycine--tRNA ligase from Aeropyrum pernix (strain ATCC 700893 / DSM 11879 / JCM 9820 / NBRC 100138 / K1).